The sequence spans 515 residues: Cytochrome P450 monooxygenase paxP (515 aa).

The chain crosses the membrane as a helical span at residues 20-36 (SLLWKLGVFAVLVYFLL). Cysteine 456 contacts heme.

It belongs to the cytochrome P450 family. The cofactor is heme.

It localises to the membrane. The protein operates within secondary metabolite biosynthesis. Its function is as follows. Cytochrome P450 monooxygenase; part of the ATM2 gene cluster that mediates the biosynthesis of paxilline, a mycotoxin that acts as an inhibitor of mammalian maxi-K channels. PaxG, the geranylgeranyl diphosphate (GGPP) synthase is proposed to catalyze the first step in paxilline biosynthesis. Condensation of indole-3-glycerol phosphate with GGPP by paxC then forms 3-geranylgeranylindole (3-GGI), followed by epoxidation and cyclization of this intermediate (by paxM and paxB) to form paspaline. Paspaline is subsequently converted to 13-desoxypaxilline by paxP, the latter being then converted to paxilline by paxQ. Finally paxilline can be mono- and di-prenylated by paxD. PaxP can also utilized beta-paxitriol and alpha-PC-M6 as substrates converting them to paxilline. The polypeptide is Cytochrome P450 monooxygenase paxP (Penicillium paxilli).